Consider the following 794-residue polypeptide: DNA ligase (794 aa).

The interval 1-47 (MEEDLFSLAAGKQPSQQATNETAPRAGEARENAGTDHPGNAEDPAHR) is disordered. Polar residues predominate over residues 13–22 (QPSQQATNET). The span at 27 to 47 (GEARENAGTDHPGNAEDPAHR) shows a compositional bias: basic and acidic residues. Residues 73–77 (DAEYD), 122–123 (SI), and Glu-160 contribute to the NAD(+) site. Lys-162 serves as the catalytic N6-AMP-lysine intermediate. Residues Arg-183, Glu-219, Lys-335, and Lys-359 each coordinate NAD(+). Residues Cys-457, Cys-460, Cys-475, and Cys-480 each contribute to the Zn(2+) site. The 78-residue stretch at 717–794 (IPAGSLSGKT…EEDFYKMIGN (78 aa)) folds into the BRCT domain.

The protein belongs to the NAD-dependent DNA ligase family. LigA subfamily. Mg(2+) is required as a cofactor. Mn(2+) serves as cofactor.

The enzyme catalyses NAD(+) + (deoxyribonucleotide)n-3'-hydroxyl + 5'-phospho-(deoxyribonucleotide)m = (deoxyribonucleotide)n+m + AMP + beta-nicotinamide D-nucleotide.. In terms of biological role, DNA ligase that catalyzes the formation of phosphodiester linkages between 5'-phosphoryl and 3'-hydroxyl groups in double-stranded DNA using NAD as a coenzyme and as the energy source for the reaction. It is essential for DNA replication and repair of damaged DNA. The sequence is that of DNA ligase from Akkermansia muciniphila (strain ATCC BAA-835 / DSM 22959 / JCM 33894 / BCRC 81048 / CCUG 64013 / CIP 107961 / Muc).